The primary structure comprises 276 residues: 1-(5-phosphoribosyl)-5-[(5-phosphoribosylamino)methylideneamino] imidazole-4-carboxamide isomerase (276 aa).

It belongs to the HisA/HisF family.

The protein localises to the cytoplasm. It catalyses the reaction 1-(5-phospho-beta-D-ribosyl)-5-[(5-phospho-beta-D-ribosylamino)methylideneamino]imidazole-4-carboxamide = 5-[(5-phospho-1-deoxy-D-ribulos-1-ylimino)methylamino]-1-(5-phospho-beta-D-ribosyl)imidazole-4-carboxamide. Its pathway is amino-acid biosynthesis; L-histidine biosynthesis; L-histidine from 5-phospho-alpha-D-ribose 1-diphosphate: step 4/9. The sequence is that of 1-(5-phosphoribosyl)-5-[(5-phosphoribosylamino)methylideneamino] imidazole-4-carboxamide isomerase (HIS6) from Debaryomyces hansenii (strain ATCC 36239 / CBS 767 / BCRC 21394 / JCM 1990 / NBRC 0083 / IGC 2968) (Yeast).